The primary structure comprises 420 residues: MDKFRVQGPTRLSGEVTISGAKNAALPILFAALLAEEPVEIQNVPKLKDIDTTMKLLSQLGVKAERNGSVYLDASKVDIYCAPYELVKTMRASIWALGPLVARFGQGQVSLPGGCAIGARPVDLHITGLEQLGAEIKLEEGYVKASVDGRLKGAHIVMDKVSVGATVTIMSAATLATGTTVIENAAREPEIVDTANFLNTLGAKISGAGSDRITIEGVERLGGGVYRVLPDRIETGTFLVAGAISGGKVICRAAQPDTLDAVLAKLREAGAEIEVGDDWVSLDMHGKRPKAVSLRTAPHPGFPTDMQAQFSLLNLVAEGTGVITETIFENRFMHVPELARMGAHAEIESHTLICHGVEKLSSAQVMATDLRASASLVLAGCIAEGVTVVDRIYHIDRGYEHIEDKLIALGANIQRISGEE.

22-23 serves as a coordination point for phosphoenolpyruvate; sequence KN. A UDP-N-acetyl-alpha-D-glucosamine-binding site is contributed by Arg-91. Cys-115 acts as the Proton donor in catalysis. Cys-115 carries the 2-(S-cysteinyl)pyruvic acid O-phosphothioketal modification. Residues 120 to 124, 160 to 163, Asp-305, and Ile-327 contribute to the UDP-N-acetyl-alpha-D-glucosamine site; these read RPVDL and KVSV.

This sequence belongs to the EPSP synthase family. MurA subfamily.

It is found in the cytoplasm. It carries out the reaction phosphoenolpyruvate + UDP-N-acetyl-alpha-D-glucosamine = UDP-N-acetyl-3-O-(1-carboxyvinyl)-alpha-D-glucosamine + phosphate. It functions in the pathway cell wall biogenesis; peptidoglycan biosynthesis. Cell wall formation. Adds enolpyruvyl to UDP-N-acetylglucosamine. This is UDP-N-acetylglucosamine 1-carboxyvinyltransferase from Erwinia tasmaniensis (strain DSM 17950 / CFBP 7177 / CIP 109463 / NCPPB 4357 / Et1/99).